A 264-amino-acid polypeptide reads, in one-letter code: Thiazole synthase (264 aa).

Lys100 (schiff-base intermediate with DXP) is an active-site residue. Residues Gly161, 187-188, and 209-210 contribute to the 1-deoxy-D-xylulose 5-phosphate site; these read AG and NT.

Belongs to the ThiG family. Homotetramer. Forms heterodimers with either ThiH or ThiS.

The protein resides in the cytoplasm. The catalysed reaction is [ThiS sulfur-carrier protein]-C-terminal-Gly-aminoethanethioate + 2-iminoacetate + 1-deoxy-D-xylulose 5-phosphate = [ThiS sulfur-carrier protein]-C-terminal Gly-Gly + 2-[(2R,5Z)-2-carboxy-4-methylthiazol-5(2H)-ylidene]ethyl phosphate + 2 H2O + H(+). Its pathway is cofactor biosynthesis; thiamine diphosphate biosynthesis. In terms of biological role, catalyzes the rearrangement of 1-deoxy-D-xylulose 5-phosphate (DXP) to produce the thiazole phosphate moiety of thiamine. Sulfur is provided by the thiocarboxylate moiety of the carrier protein ThiS. In vitro, sulfur can be provided by H(2)S. The chain is Thiazole synthase from Nitrosospira multiformis (strain ATCC 25196 / NCIMB 11849 / C 71).